Consider the following 288-residue polypeptide: ATP synthase gamma chain (288 aa).

This sequence belongs to the ATPase gamma chain family. In terms of assembly, F-type ATPases have 2 components, CF(1) - the catalytic core - and CF(0) - the membrane proton channel. CF(1) has five subunits: alpha(3), beta(3), gamma(1), delta(1), epsilon(1). CF(0) has three main subunits: a, b and c.

It is found in the cell inner membrane. Functionally, produces ATP from ADP in the presence of a proton gradient across the membrane. The gamma chain is believed to be important in regulating ATPase activity and the flow of protons through the CF(0) complex. This chain is ATP synthase gamma chain, found in Aeromonas hydrophila subsp. hydrophila (strain ATCC 7966 / DSM 30187 / BCRC 13018 / CCUG 14551 / JCM 1027 / KCTC 2358 / NCIMB 9240 / NCTC 8049).